The chain runs to 371 residues: S-adenosylmethionine:tRNA ribosyltransferase-isomerase (371 aa).

It belongs to the QueA family. Monomer.

It localises to the cytoplasm. The enzyme catalyses 7-aminomethyl-7-carbaguanosine(34) in tRNA + S-adenosyl-L-methionine = epoxyqueuosine(34) in tRNA + adenine + L-methionine + 2 H(+). Its pathway is tRNA modification; tRNA-queuosine biosynthesis. Functionally, transfers and isomerizes the ribose moiety from AdoMet to the 7-aminomethyl group of 7-deazaguanine (preQ1-tRNA) to give epoxyqueuosine (oQ-tRNA). The sequence is that of S-adenosylmethionine:tRNA ribosyltransferase-isomerase from Nitratidesulfovibrio vulgaris (strain DP4) (Desulfovibrio vulgaris).